We begin with the raw amino-acid sequence, 470 residues long: ATP synthase subunit beta (470 aa).

Position 155 to 162 (155 to 162 (GGAGVGKT)) interacts with ATP.

Belongs to the ATPase alpha/beta chains family. F-type ATPases have 2 components, CF(1) - the catalytic core - and CF(0) - the membrane proton channel. CF(1) has five subunits: alpha(3), beta(3), gamma(1), delta(1), epsilon(1). CF(0) has three main subunits: a(1), b(2) and c(9-12). The alpha and beta chains form an alternating ring which encloses part of the gamma chain. CF(1) is attached to CF(0) by a central stalk formed by the gamma and epsilon chains, while a peripheral stalk is formed by the delta and b chains.

It is found in the cell membrane. The enzyme catalyses ATP + H2O + 4 H(+)(in) = ADP + phosphate + 5 H(+)(out). In terms of biological role, produces ATP from ADP in the presence of a proton gradient across the membrane. The catalytic sites are hosted primarily by the beta subunits. The sequence is that of ATP synthase subunit beta from Staphylococcus haemolyticus (strain JCSC1435).